The chain runs to 720 residues: MEEAEELLLEGKKALQLAREPRLGLDLGWNPSGEGCTQGLKDVPPEPTRDILALKSLPRGLALGPSLAKEQRLGVWCVGDPLQPGLLWGPLEEESASKEKGEGVKPRQEENLSLGPWGDVCACEQSSGWTSLVQRGRLESEGNVAPVRISERLHLQVYQLVLPGSELLLWPQPSSEGPSLTQPGLDKEAAVAVVTEVESAVQQEVASPGEDAAEPCIDPGSQSPSGIQAENMVSPGLKFPTQDRISKDSQPLGPLLQDGDVDEECPAQAQMPPELQSNSATQQDPDGSGASFSSSARGTQPHGYLAKKLHSPSDQCPPRAKTPEPGAQQSGFPTLSRSPPGPAGSSPKQGRRYRCGECGKAFLQLCHLKKHAFVHTGHKPFLCTECGKSYSSEESFKAHMLGHRGVRPFPCPQCDKAYGTQRDLKEHQVVHSGARPFACDQCGKAFARRPSLRLHRKTHQVPAAPAPCPCPVCGRPLANQGSLRNHMRLHTGEKPFLCPHCGRAFRQRGNLRGHLRLHTGERPYRCPHCADAFPQLPELRRHLISHTGEAHLCPVCGKALRDPHTLRAHERLHSGERPFPCPQCGRAYTLATKLRRHLKSHLEDKPYRCPTCGMGYTLPQSLRRHQLSHRPEAPCSPPSVPSAASEPTVVLLQAEPQLLDTHREEEVSPARDVVEVTISESQEKCFVVPEEPDAAPSLVLIHKDMGLGAWAEVVEVEMGT.

The segment at 201–350 (VQQEVASPGE…GPAGSSPKQG (150 aa)) is disordered. Residues 275–285 (LQSNSATQQDP) show a composition bias toward polar residues. The span at 287 to 296 (GSGASFSSSA) shows a compositional bias: low complexity. T322 is subject to Phosphothreonine. C2H2-type zinc fingers lie at residues 353-375 (YRCGECGKAFLQLCHLKKHAFVH), 381-403 (FLCTECGKSYSSEESFKAHMLGH), 409-431 (FPCPQCDKAYGTQRDLKEHQVVH), 437-459 (FACDQCGKAFARRPSLRLHRKTH), 468-490 (CPCPVCGRPLANQGSLRNHMRLH), 496-518 (FLCPHCGRAFRQRGNLRGHLRLH), 524-546 (YRCPHCADAFPQLPELRRHLISH), 551-573 (HLCPVCGKALRDPHTLRAHERLH), 579-601 (FPCPQCGRAYTLATKLRRHLKSH), and 607-629 (YRCPTCGMGYTLPQSLRRHQLSH).

In terms of tissue distribution, highest expression is observed in adult retina; abundantly expressed in the fetal eye. In the retina, it is detected in the outer nuclear layer, especially cone and rod photoreceptor cells, ganglion cell layer and both outer and inner plexiform layers (at protein level). Expressed in retinal blood vessels (at protein level).

It localises to the nucleus. May be involved in transcriptional regulation. The polypeptide is Zinc finger protein 408 (ZNF408) (Homo sapiens (Human)).